We begin with the raw amino-acid sequence, 112 residues long: MTLALMQSMGKLKFLHCLLPLPFRDVPFPLRASKLRDFNAINKFVPLRDVSGSCEVLILYINIECLHTPKEDVSGSGTATAILILRRSSGGPTATKIYLPEDVLPTAEANEF.

The protein resides in the plastid. The protein localises to the chloroplast. This is an uncharacterized protein from Chlamydomonas reinhardtii (Chlamydomonas smithii).